Reading from the N-terminus, the 478-residue chain is Protein nucleotidyltransferase YdiU (478 aa).

8 residues coordinate ATP: Gly-84, Gly-86, Arg-87, Lys-107, Asp-119, Gly-120, Arg-170, and Arg-177. The active-site Proton acceptor is Asp-246. 2 residues coordinate Mg(2+): Asn-247 and Asp-256. Asp-256 contacts ATP.

The protein belongs to the SELO family. Requires Mg(2+) as cofactor. It depends on Mn(2+) as a cofactor.

It catalyses the reaction L-seryl-[protein] + ATP = 3-O-(5'-adenylyl)-L-seryl-[protein] + diphosphate. It carries out the reaction L-threonyl-[protein] + ATP = 3-O-(5'-adenylyl)-L-threonyl-[protein] + diphosphate. The catalysed reaction is L-tyrosyl-[protein] + ATP = O-(5'-adenylyl)-L-tyrosyl-[protein] + diphosphate. The enzyme catalyses L-histidyl-[protein] + UTP = N(tele)-(5'-uridylyl)-L-histidyl-[protein] + diphosphate. It catalyses the reaction L-seryl-[protein] + UTP = O-(5'-uridylyl)-L-seryl-[protein] + diphosphate. It carries out the reaction L-tyrosyl-[protein] + UTP = O-(5'-uridylyl)-L-tyrosyl-[protein] + diphosphate. Nucleotidyltransferase involved in the post-translational modification of proteins. It can catalyze the addition of adenosine monophosphate (AMP) or uridine monophosphate (UMP) to a protein, resulting in modifications known as AMPylation and UMPylation. This Escherichia coli O9:H4 (strain HS) protein is Protein nucleotidyltransferase YdiU.